Reading from the N-terminus, the 140-residue chain is Large ribosomal subunit protein uL14 (140 aa).

This sequence belongs to the universal ribosomal protein uL14 family. Part of the 50S ribosomal subunit. Forms a cluster with proteins L3 and L24e, part of which may contact the 16S rRNA in 2 intersubunit bridges.

Functionally, binds to 23S rRNA. Forms part of two intersubunit bridges in the 70S ribosome. The chain is Large ribosomal subunit protein uL14 from Nitrosopumilus maritimus (strain SCM1).